A 133-amino-acid polypeptide reads, in one-letter code: Salivary cystatin-L (133 aa).

A signal peptide spans 1–19 (MTSSFALVLLLGGVAVCVA). One can recognise a Cystatin domain in the interval 30–117 (ANHQANPEFL…HRTCTTVVFE (88 aa)). 2 cysteine pairs are disulfide-bonded: C89–C100 and C111–C130.

Belongs to the cystatin family. Monomer. Can form homodimers in vitro, but probably not in vivo. Homodimers are predicted to be inactive; dimerization disrupts the interaction with target proteases.

The protein localises to the secreted. In terms of biological role, inhibitor of cysteine proteinases. Inhibits host immune responses via its inhibition of host cathepsins. Contributes to the suppression of the host's immune response to tick salivary proteins and is important for successful feeding on hosts. Inhibits differentiation of host dendritic cells. Inhibits proliferation of host T-cells in response to antigen stimulus. Down-regulates TLR2-mediated host responses to infection by B.burgdorferi and the production of the chemokine CCL3 by host dendritic cells. Down-regulates host responses to infection by B.burgdorferi and the production of IFNB1 by host dendritic cells. Down-regulates IL1B production by host mast cells, and this then leads to impaired activation of IL1R1, resulting in decreased IL9 production. Inhibits host inflammatory reactions and recruitment of host neutrophils. Inhibits papain and cathepsin L (CTSL) (in vitro). Inhibits cathepsin S (CTSS) (in vitro). Inhibits CTSV and CTSC, but to a lesser degree (in vitro). This is Salivary cystatin-L from Ixodes scapularis (Black-legged tick).